Consider the following 454-residue polypeptide: Bifunctional protein GlmU (454 aa).

Positions 1 to 228 are pyrophosphorylase; sequence MSLKVIILAA…EMEVLGVNNK (228 aa). Residues 8–11, Lys22, Gln73, 78–79, 100–102, Gly138, Glu153, Asn168, and Asn226 contribute to the UDP-N-acetyl-alpha-D-glucosamine site; these read LAAG, GT, and YGD. Asp102 contacts Mg(2+). Asn226 is a Mg(2+) binding site. The linker stretch occupies residues 229–249; that stretch reads SQLQSLERQYQAQLAEELMEQ. The N-acetyltransferase stretch occupies residues 250-454; the sequence is GVTVLDASRI…IKGWQKPTKN (205 aa). The UDP-N-acetyl-alpha-D-glucosamine site is built by Arg332 and Lys350. Catalysis depends on His362, which acts as the Proton acceptor. UDP-N-acetyl-alpha-D-glucosamine contacts are provided by Tyr365 and Asn376. Acetyl-CoA contacts are provided by residues Ala379, 385–386, Ser404, Ala422, and Arg439; that span reads NY.

In the N-terminal section; belongs to the N-acetylglucosamine-1-phosphate uridyltransferase family. It in the C-terminal section; belongs to the transferase hexapeptide repeat family. In terms of assembly, homotrimer. The cofactor is Mg(2+).

Its subcellular location is the cytoplasm. The catalysed reaction is alpha-D-glucosamine 1-phosphate + acetyl-CoA = N-acetyl-alpha-D-glucosamine 1-phosphate + CoA + H(+). The enzyme catalyses N-acetyl-alpha-D-glucosamine 1-phosphate + UTP + H(+) = UDP-N-acetyl-alpha-D-glucosamine + diphosphate. It functions in the pathway nucleotide-sugar biosynthesis; UDP-N-acetyl-alpha-D-glucosamine biosynthesis; N-acetyl-alpha-D-glucosamine 1-phosphate from alpha-D-glucosamine 6-phosphate (route II): step 2/2. Its pathway is nucleotide-sugar biosynthesis; UDP-N-acetyl-alpha-D-glucosamine biosynthesis; UDP-N-acetyl-alpha-D-glucosamine from N-acetyl-alpha-D-glucosamine 1-phosphate: step 1/1. The protein operates within bacterial outer membrane biogenesis; LPS lipid A biosynthesis. Functionally, catalyzes the last two sequential reactions in the de novo biosynthetic pathway for UDP-N-acetylglucosamine (UDP-GlcNAc). The C-terminal domain catalyzes the transfer of acetyl group from acetyl coenzyme A to glucosamine-1-phosphate (GlcN-1-P) to produce N-acetylglucosamine-1-phosphate (GlcNAc-1-P), which is converted into UDP-GlcNAc by the transfer of uridine 5-monophosphate (from uridine 5-triphosphate), a reaction catalyzed by the N-terminal domain. The sequence is that of Bifunctional protein GlmU from Hydrogenovibrio crunogenus (strain DSM 25203 / XCL-2) (Thiomicrospira crunogena).